We begin with the raw amino-acid sequence, 292 residues long: Ribosomal RNA small subunit methyltransferase A (292 aa).

S-adenosyl-L-methionine-binding residues include asparagine 29, leucine 31, glycine 56, glutamate 77, aspartate 102, and asparagine 127.

Belongs to the class I-like SAM-binding methyltransferase superfamily. rRNA adenine N(6)-methyltransferase family. RsmA subfamily.

It localises to the cytoplasm. It carries out the reaction adenosine(1518)/adenosine(1519) in 16S rRNA + 4 S-adenosyl-L-methionine = N(6)-dimethyladenosine(1518)/N(6)-dimethyladenosine(1519) in 16S rRNA + 4 S-adenosyl-L-homocysteine + 4 H(+). Its function is as follows. Specifically dimethylates two adjacent adenosines (A1518 and A1519) in the loop of a conserved hairpin near the 3'-end of 16S rRNA in the 30S particle. May play a critical role in biogenesis of 30S subunits. This chain is Ribosomal RNA small subunit methyltransferase A, found in Bacillus subtilis (strain 168).